We begin with the raw amino-acid sequence, 1055 residues long: Sodium/potassium exporting P-type ATPase 1 (1055 aa).

Over 1–73 (MTPSIGYVDE…GADEKISISK (73 aa)) the chain is Cytoplasmic. A helical membrane pass occupies residues 74-94 (ILAHQIFNAMVLVLIISLIIA). The Extracellular portion of the chain corresponds to 95-99 (LAIKD). A helical transmembrane segment spans residues 100–120 (WISGGVIGFVVFINIFVGFIQ). At 121-298 (ELKAEKTMGS…TNVGTPLQRK (178 aa)) the chain is on the cytoplasmic side. A helical membrane pass occupies residues 299-319 (LSWLAILLFWVAVLFAIVVMA). The Extracellular portion of the chain corresponds to 320–328 (SQEMRVNRN). The helical transmembrane segment at 329 to 349 (VAIYAICVALSMIPSSLVVVL) threads the bilayer. Residues 350–789 (TITMAIGAQV…RMSSNIQKFV (440 aa)) lie on the Cytoplasmic side of the membrane. The active-site 4-aspartylphosphate intermediate is aspartate 385. Aspartate 385 and threonine 387 together coordinate Mg(2+). The ATP site is built by threonine 387, glutamate 491, lysine 544, arginine 586, threonine 646, glycine 647, aspartate 648, arginine 705, and lysine 711. Aspartate 730 contributes to the Mg(2+) binding site. Asparagine 733 lines the ATP pocket. The helical transmembrane segment at 790 to 810 (LQLLAENVAQALYLMIGLAFI) threads the bilayer. Over 811–816 (DKSGYS) the chain is Extracellular. Residues 817 to 837 (VFPLSPVEVLWIIVVTSCFPA) traverse the membrane as a helical segment. Over 838–866 (MGLGQEKASHDILEQPPNATIFTWEVIID) the chain is Cytoplasmic. A helical membrane pass occupies residues 867 to 887 (MIAYGFWMAVCCLVCFVCIVY). At 888–913 (GKGDGSLGENCNEGSDTGCNLVFRGR) the chain is on the extracellular side. Residues 914–934 (SGAFAAFTWCALLLAWECIHL) form a helical membrane-spanning segment. Residues 935-962 (RLSFFKMRPELENPWWKQLAIDLWDNQF) lie on the Cytoplasmic side of the membrane. The chain crosses the membrane as a helical span at residues 963–983 (LFWSVMGAIVSVFPVVYIPVI). The Extracellular segment spans residues 984 to 990 (NNKVFLH). A helical transmembrane segment spans residues 991-1011 (APIGYEWGLAVAFTILFLIGA). The Cytoplasmic portion of the chain corresponds to 1012 to 1055 (EGWKWFKRVYYRKSNANNPEYDLERNDPFKEYSSFSKSNTMEIV).

It belongs to the cation transport ATPase (P-type) (TC 3.A.3) family. Type IID subfamily. Mg(2+) serves as cofactor. In terms of processing, the active site is phosphorylated in presence of sodium or potassium and in conditions of higher pH. Not phosphorylated in presence of calcium ions.

The protein resides in the cell membrane. The enzyme catalyses Na(+)(in) + ATP + H2O = Na(+)(out) + ADP + phosphate + H(+). It catalyses the reaction K(+)(in) + ATP + H2O = K(+)(out) + ADP + phosphate + H(+). Catalyzes the hydrolysis of ATP coupled with the export of sodium and potassium from the cell. May be an inefficient potassium exporter. May transport other cations such as lithium. Sodium/potassium efflux ATPases are involved in salt tolerance and maintaining the membrane potential across the plasma membrane in high salinity (Na+) or alkaline (K+) environments. The protein is Sodium/potassium exporting P-type ATPase 1 of Schwanniomyces occidentalis (Yeast).